The primary structure comprises 381 residues: Homoserine O-succinyltransferase (381 aa).

The region spanning 53–361 (ILICHALSGS…DSVHGHDAFL (309 aa)) is the AB hydrolase-1 domain. Ser-157 serves as the catalytic Nucleophile. Arg-227 contacts substrate. Catalysis depends on residues Asp-324 and His-357. Asp-358 lines the substrate pocket.

It belongs to the AB hydrolase superfamily. MetX family. As to quaternary structure, homodimer.

Its subcellular location is the cytoplasm. It catalyses the reaction L-homoserine + succinyl-CoA = O-succinyl-L-homoserine + CoA. It participates in amino-acid biosynthesis; L-methionine biosynthesis via de novo pathway; O-succinyl-L-homoserine from L-homoserine: step 1/1. In terms of biological role, transfers a succinyl group from succinyl-CoA to L-homoserine, forming succinyl-L-homoserine. This Saccharophagus degradans (strain 2-40 / ATCC 43961 / DSM 17024) protein is Homoserine O-succinyltransferase.